The chain runs to 224 residues: MFTILLYFLVLFWVTNAAVVTPSIENHKMENASVTISKVPISHRPRGFTAGSDSKKLAVQRFKLLISDFLSDAQLSKSIDVAAVGMHKGKSMDDILDDVYTRLRRTLSTKQISELAKAQKGLVEDLDEKSAKLVKARVKRMIVYSFDPAAEQIHKYATRPSMAFALIAETINERFVGSVKDLIRDVLTPKEYDIFRKHYHPHIFKLDNIGNNTEAVRTTTHETF.

The signal sequence occupies residues 1–17 (MFTILLYFLVLFWVTNA).

This is an uncharacterized protein from Caenorhabditis elegans.